A 193-amino-acid chain; its full sequence is Putative manganese efflux pump MntP (193 aa).

6 helical membrane passes run 3–23, 41–61, 65–85, 106–126, 133–153, and 169–189; these read MYATLILALALSMDAFAASIC, LIFGLAEACTPLIGWSLGLYA, IIEWDHWVAFTLLFILGCRMI, IVLITTAIATSLDAMAIGIGL, IVHTAMAIGMMTMIMATLGML, and IGGLILIAIGFNILFEHLELF.

The protein belongs to the MntP (TC 9.B.29) family.

It is found in the cell inner membrane. In terms of biological role, probably functions as a manganese efflux pump. The chain is Putative manganese efflux pump MntP from Photorhabdus laumondii subsp. laumondii (strain DSM 15139 / CIP 105565 / TT01) (Photorhabdus luminescens subsp. laumondii).